A 179-amino-acid chain; its full sequence is Large ribosomal subunit protein uL6 (179 aa).

It belongs to the universal ribosomal protein uL6 family. As to quaternary structure, part of the 50S ribosomal subunit.

In terms of biological role, this protein binds to the 23S rRNA, and is important in its secondary structure. It is located near the subunit interface in the base of the L7/L12 stalk, and near the tRNA binding site of the peptidyltransferase center. In Leptospira interrogans serogroup Icterohaemorrhagiae serovar copenhageni (strain Fiocruz L1-130), this protein is Large ribosomal subunit protein uL6.